Reading from the N-terminus, the 408-residue chain is MDAIILCAGKGERLRPLTENRPKPMIPIAGKPILQHIIEKVEDLVDNIYLIVKYKKEKIVDYFKNHPKIKFLEQGEIDGTGQAVLTAKDYVDDEFLVINGDIIFEDDLEEFLKYKYAVAVKEVKNPENFGVVVLDDENNIIELQEKPENPKSNLINAGIYKFDKKIFELIEKTKISERGERELTDAIKHLIKEEKVKGIKLNGYWNDVGRPWDILEANKYLLDKINTDIKGKIEENVVIKGEVIIEEGAIVKANSVIEGPAIIKKGAVVGPLAYIRPYTVLMENTFVGNSSEVKASIIMKNTKIPHLSYVGDSIIGENCNFGCNTITANLRFDDKPVKVNIKSKRVESVRKLGVIMGDNVKTGIQVSFMPGVKVGSNCWIGASCLIDRDIESNTFVYKRDELIFRKLK.

The interval Met-1–Asn-202 is pyrophosphorylase. UTP is bound by residues Leu-6–Gly-9, Gln-74, and Gly-79. Residues Thr-80, Gly-130, Glu-142, and Asn-156 each coordinate N-acetyl-alpha-D-glucosamine 1-phosphate. Positions Gly-203–Leu-222 are linker. The segment at Asp-223–Lys-408 is N-acetyltransferase. The active-site Proton acceptor is His-306. 2 residues coordinate acetyl-CoA: Ala-382 and Arg-399.

The protein in the N-terminal section; belongs to the N-acetylglucosamine-1-phosphate uridyltransferase family. In the C-terminal section; belongs to the transferase hexapeptide repeat family.

It catalyses the reaction N-acetyl-alpha-D-glucosamine 1-phosphate + UTP + H(+) = UDP-N-acetyl-alpha-D-glucosamine + diphosphate. The catalysed reaction is alpha-D-glucosamine 1-phosphate + acetyl-CoA = N-acetyl-alpha-D-glucosamine 1-phosphate + CoA + H(+). It functions in the pathway nucleotide-sugar biosynthesis; UDP-N-acetyl-alpha-D-glucosamine biosynthesis; N-acetyl-alpha-D-glucosamine 1-phosphate from alpha-D-glucosamine 6-phosphate (route II): step 2/2. It participates in nucleotide-sugar biosynthesis; UDP-N-acetyl-alpha-D-glucosamine biosynthesis; UDP-N-acetyl-alpha-D-glucosamine from N-acetyl-alpha-D-glucosamine 1-phosphate: step 1/1. Catalyzes the last two sequential reactions in the de novo biosynthetic pathway for UDP-N-acetyl-glucosamine (UDP-GlcNAc). Responsible for the acetylation of GlcN-1-P to GlcNAc-1-P, and for the uridyl transfer from UTP to GlcNAc-1-P, to produce UDP-GlcNAc and pyrophosphate. Also catalyzes the reverse reaction, i.e. the cleavage of UDP-GlcNAc with pyrophosphate to form UTP and GlcNAc-1-P. To a lesser extent, is also able to use dUTP or dTTP as the nucleotide substrate, but not CTP, ATP or GTP. This Methanocaldococcus jannaschii (strain ATCC 43067 / DSM 2661 / JAL-1 / JCM 10045 / NBRC 100440) (Methanococcus jannaschii) protein is Bifunctional protein GlmU (glmU).